Reading from the N-terminus, the 485-residue chain is 2-succinylbenzoate--CoA ligase (485 aa).

Belongs to the ATP-dependent AMP-binding enzyme family. MenE subfamily.

The enzyme catalyses 2-succinylbenzoate + ATP + CoA = 2-succinylbenzoyl-CoA + AMP + diphosphate. The protein operates within quinol/quinone metabolism; 1,4-dihydroxy-2-naphthoate biosynthesis; 1,4-dihydroxy-2-naphthoate from chorismate: step 5/7. It functions in the pathway quinol/quinone metabolism; menaquinone biosynthesis. Functionally, converts 2-succinylbenzoate (OSB) to 2-succinylbenzoyl-CoA (OSB-CoA). This is 2-succinylbenzoate--CoA ligase from Enterococcus faecalis (strain ATCC 700802 / V583).